Reading from the N-terminus, the 218-residue chain is Thiopurine S-methyltransferase (218 aa).

Trp10, Leu45, Glu66, and Arg123 together coordinate S-adenosyl-L-methionine.

Belongs to the class I-like SAM-binding methyltransferase superfamily. TPMT family.

It is found in the cytoplasm. It catalyses the reaction S-adenosyl-L-methionine + a thiopurine = S-adenosyl-L-homocysteine + a thiopurine S-methylether.. In terms of biological role, involved in the biological cycling of tellurium and selenium. Tellurium resistance (Ter) mechanism. This is Thiopurine S-methyltransferase from Pseudomonas syringae pv. pisi.